A 408-amino-acid chain; its full sequence is G patch domain-containing protein 4 (408 aa).

Met1 carries the post-translational modification N-acetylmethionine. At Thr4 the chain carries Phosphothreonine. A G-patch domain is found at 11–57 (GMKFAEEQLLKHGWTQGKGLGRKENGITQALRVTLKQDTYGVGHDPA). Residue Lys46 forms a Glycyl lysine isopeptide (Lys-Gly) (interchain with G-Cter in SUMO2) linkage. Position 116 is a phosphothreonine (Thr116). Disordered regions lie at residues 116 to 141 (TSSG…KPPN) and 187 to 408 (GQDP…KKRD). 2 positions are modified to phosphoserine: Ser128 and Ser130. Composition is skewed to basic and acidic residues over residues 222–236 (RSAE…ESIR), 245–257 (HQEE…REGT), and 274–283 (LKNREHVDRS). Residues 340–354 (EEDLNTEDEEVEEAL) show a composition bias toward acidic residues. Over residues 358-372 (GTREAESRSCSDQKR) the composition is skewed to basic and acidic residues. The segment covering 398-408 (KAKKKKQKKRD) has biased composition (basic residues).

The protein is G patch domain-containing protein 4 (GPATCH4) of Bos taurus (Bovine).